A 190-amino-acid chain; its full sequence is Bifunctional protein PyrR (190 aa).

The PRPP-binding motif lies at 112-124; that stretch reads VILVDDVLYSGRS.

Belongs to the purine/pyrimidine phosphoribosyltransferase family. PyrR subfamily.

It carries out the reaction UMP + diphosphate = 5-phospho-alpha-D-ribose 1-diphosphate + uracil. Regulates the transcription of the pyrimidine nucleotide (pyr) operon in response to exogenous pyrimidines. Functionally, also displays a weak uracil phosphoribosyltransferase activity which is not physiologically significant. This chain is Bifunctional protein PyrR, found in Mycolicibacterium paratuberculosis (strain ATCC BAA-968 / K-10) (Mycobacterium paratuberculosis).